A 227-amino-acid polypeptide reads, in one-letter code: Holin (227 aa).

The Cytoplasmic segment spans residues 1-33 (MVLVRGGYKLEKFLQLLTVLLQEAKDPASLLKR). A helical; Signal-anchor for type II membrane protein membrane pass occupies residues 34 to 48 (LLTILVAVIIFLFVS). The Periplasmic segment spans residues 49-227 (NTSEVMSFLK…PQQRSLGRSI (179 aa)). Cys178 and Cys216 form a disulfide bridge.

It belongs to the T4likevirus holin family. Homomultimer. Heterotetramer composed of 2 holin and 2 antiholin. The holin-antiholin complex binds dsDNA. Interacts (via C-terminus) with antiholin (via C-terminus); this interaction blocks the holin homomultimerization and delays host cell lysis. Interacts (via N-terminus) with the lysis inhibition accessory protein rIII; this interaction stabilizes the holin-antiholin complex thereby resulting in a robust block of the hole formation. Disulfide bond is required for functionality.

The protein resides in the host cell inner membrane. Functionally, accumulates harmlessly in the cytoplasmic membrane until it reaches a critical concentration that triggers the formation of micron-scale pores (holes) causing host cell membrane disruption and endolysin escape into the periplasmic space. Determines the precise timing of host cell lysis. Regulated by specific antiholins that somehow sense superinfections and then delay lysis. Participates with the endolysin and spanin proteins in the sequential events which lead to the programmed host cell lysis releasing the mature viral particles from the host cell. The polypeptide is Holin (Escherichia phage T5 (Enterobacteria phage T5)).